Here is a 357-residue protein sequence, read N- to C-terminus: DENN domain-containing protein 10 (357 aa).

Positions 1-140 (MAAAEVADTQ…TKGICQSEEN (140 aa)) constitute a uDENN domain. The region spanning 165 to 299 (QFGMETVILH…PEKSESHVIQ (135 aa)) is the cDENN domain. Residues 301–357 (IALKTREIFTNLAPFSEVSADGEKRVLNLEALKQKRFPPATENFLYHLAAAEQMLKI) enclose the dDENN domain.

It belongs to the DENND10 family. In terms of assembly, interacts with the coiled-coil heterodimer of CCDC22 and CCDC93; the interaction is direct. Interacts with RAB27A and RAB27B (GDP-bound forms preferentially).

Its subcellular location is the late endosome. In terms of biological role, guanine nucleotide exchange factor (GEF) regulating homeostasis of late endocytic pathway, including endosomal positioning, maturation and secretion, possibly through activating Rab proteins such as RAB27A and RAB27B. Promotes the exchange of GDP to GTP, converting inactive GDP-bound RAB27A and RAB27B into their active GTP-bound form. The polypeptide is DENN domain-containing protein 10 (Homo sapiens (Human)).